Consider the following 429-residue polypeptide: C4-dicarboxylate transport protein (429 aa).

The next 8 helical transmembrane spans lie at 3 to 23, 44 to 64, 76 to 96, 144 to 164, 184 to 204, 222 to 242, 331 to 351, and 352 to 372; these read VSIFKTLYFQVLTAITIGVLL, LIKMIIAPVIFCTVVTGIAGM, IALLYFEIVSTLALLIGLVVV, AFASGNILQVLLFAVLFGFAL, VIFGVINMIMRLAPLGAFGAM, LILCFYLTCILFVVLVLGTIA, TLLVVLLLSSKGAAGVTGSGF, and IVLAATISAVGHLPLAGLALI.

The protein belongs to the dicarboxylate/amino acid:cation symporter (DAACS) (TC 2.A.23) family.

It is found in the cell inner membrane. Responsible for the transport of dicarboxylates such as succinate, fumarate, and malate from the periplasm across the membrane. This Yersinia pestis bv. Antiqua (strain Antiqua) protein is C4-dicarboxylate transport protein.